A 629-amino-acid polypeptide reads, in one-letter code: MKNLGFSKKILLAAALIVVVAFSVFIVINDYRQRQSLKSSVKSELQQLGTLTTQNIQTWLESRIQLLQSMSQQVAVDGKELPQLQRAIGLPTYSDNFQLSYFGSTEGVMFSVPAGNRPADYDPRARGWYKAAQNAPGTIVTEPYIAASSGKLVMTIATPVKIQNQLAGVAGADISLDSVSKIINSLNFDGHGYAFLVSAEGKILVHPDSKLVLKNINEAYPVNTPKIATGVTEIDSGKQPEIISFTPVQGVATANWYVALVLEQDSAYAMLTEFRTSAITAMVVVVMVIILLLGPLIRVLMQPLHQMGRAMRDIADGEGDLTKRLAITSHDEFGALAESFNHFVERIHTSIREVASTAAQLGEVATRVVKVSNASMSNSDQQANRTESVAAAINELGAAAQEIAQNAARTSQQSSDASGLASDGQGVVQQTIKAMNELSGKISESCVNIESLNGKTANIGQILEVITSISQQTNLLALNAAIEAARAGEAGRGFAVVADEVRNLAHRTQDSAQQVQKMIEELQVGAREAVVNMTESQRQSEDSVGIANLAGERLGSVTRRIEEINGMNQSVAAATEEQTSVVESINVDITHINTLNQQGVDNLRQTLEACNSLEEQAARLQQLVGSFRI.

The Cytoplasmic segment spans residues 1-9 (MKNLGFSKK). Residues 10-30 (ILLAAALIVVVAFSVFIVIND) form a helical membrane-spanning segment. The Periplasmic segment spans residues 31–276 (YRQRQSLKSS…AYAMLTEFRT (246 aa)). The Cache domain occupies 36–258 (SLKSSVKSEL…QGVATANWYV (223 aa)). Residues 277–297 (SAITAMVVVVMVIILLLGPLI) traverse the membrane as a helical segment. The HAMP domain occupies 298–352 (RVLMQPLHQMGRAMRDIADGEGDLTKRLAITSHDEFGALAESFNHFVERIHTSIR). Over 298-629 (RVLMQPLHQM…LQQLVGSFRI (332 aa)) the chain is Cytoplasmic. The Methyl-accepting transducer domain occupies 357-593 (TAAQLGEVAT…SINVDITHIN (237 aa)).

It belongs to the methyl-accepting chemotaxis (MCP) protein family.

It is found in the cell inner membrane. Its function is as follows. Chemotactic-signal transducers respond to changes in the concentration of attractants and repellents in the environment, transduce a signal from the outside to the inside of the cell, and facilitate sensory adaptation through the variation of the level of methylation. PscA recognizes specifically and with high affinity L-Asp, D-Asp and L-Glu. It exerts a double function, in mediating chemotaxis to these amino acids and in modulating cyclic di-GMP (c-di-GMP) levels, causing alterations in biofilm development. Plays a key role in the infection process. It may facilitate bacterial entry into the plant. This chain is Methyl-accepting chemotaxis protein PscA, found in Pseudomonas syringae pv. tomato (strain ATCC BAA-871 / DC3000).